The primary structure comprises 479 residues: Ribosomal RNA small subunit methyltransferase F (479 aa).

Residues 125–131 (AAAPGSK), glutamate 149, aspartate 176, and aspartate 194 contribute to the S-adenosyl-L-methionine site. The Nucleophile role is filled by cysteine 247.

This sequence belongs to the class I-like SAM-binding methyltransferase superfamily. RsmB/NOP family.

Its subcellular location is the cytoplasm. The enzyme catalyses cytidine(1407) in 16S rRNA + S-adenosyl-L-methionine = 5-methylcytidine(1407) in 16S rRNA + S-adenosyl-L-homocysteine + H(+). Specifically methylates the cytosine at position 1407 (m5C1407) of 16S rRNA. The sequence is that of Ribosomal RNA small subunit methyltransferase F from Salmonella enteritidis PT4 (strain P125109).